The chain runs to 56 residues: Small ribosomal subunit protein uS14 (56 aa).

Belongs to the universal ribosomal protein uS14 family.

The protein is Small ribosomal subunit protein uS14 (RPS29) of Kluyveromyces lactis (strain ATCC 8585 / CBS 2359 / DSM 70799 / NBRC 1267 / NRRL Y-1140 / WM37) (Yeast).